The chain runs to 466 residues: L-seryl-tRNA(Sec) selenium transferase (466 aa).

N6-(pyridoxal phosphate)lysine is present on Lys292.

The protein belongs to the SelA family. The cofactor is pyridoxal 5'-phosphate.

It localises to the cytoplasm. The enzyme catalyses L-seryl-tRNA(Sec) + selenophosphate + H(+) = L-selenocysteinyl-tRNA(Sec) + phosphate. The protein operates within aminoacyl-tRNA biosynthesis; selenocysteinyl-tRNA(Sec) biosynthesis; selenocysteinyl-tRNA(Sec) from L-seryl-tRNA(Sec) (bacterial route): step 1/1. In terms of biological role, converts seryl-tRNA(Sec) to selenocysteinyl-tRNA(Sec) required for selenoprotein biosynthesis. In Rhizobium meliloti (strain 1021) (Ensifer meliloti), this protein is L-seryl-tRNA(Sec) selenium transferase.